The sequence spans 203 residues: MNSLTWILAVLFVTPAASYFIHVDANEEQCFFDRLTSGTKMGLMFEVAEGGFLDIDVKITGPDNKEIYKGERESSGKFTFAAHMDGVYTYCFGNKMSTMTPKAVMFTVEITEPHQQAPGAAANQDAADNAKLEEMVRELSSALMSVKHEQEYMEVRERVHRNINENTNSRVVMWAAFEAFVLVGMTVGQIFYLKRFFEVRTMV.

A signal peptide spans 1-18 (MNSLTWILAVLFVTPAAS). The Lumenal segment spans residues 19 to 170 (YFIHVDANEE…RNINENTNSR (152 aa)). One can recognise a GOLD domain in the interval 28 to 110 (EQCFFDRLTS…PKAVMFTVEI (83 aa)). Residues 171–191 (VVMWAAFEAFVLVGMTVGQIF) traverse the membrane as a helical segment. The Cytoplasmic portion of the chain corresponds to 192-203 (YLKRFFEVRTMV).

Belongs to the EMP24/GP25L family.

The protein resides in the cytoplasmic vesicle membrane. Its subcellular location is the cytoplasmic vesicle. The protein localises to the COPI-coated vesicle membrane. It is found in the golgi apparatus membrane. May have a role in the negative regulation of lin-12 and glp-1 transport to the cell surface. May also have a role in a quality control mechanism for endoplasmic reticulum-Golgi transport; the budding of coatomer-coated and other species of coated vesicles, could bind cargo molecules to collect them into budding vesicles. Involved in regulating the expression of proteasomal subunits such as rpt-3 in order to confer resistance to proteasomal dysfunction. The protein is Suppressor/enhancer of lin-12 protein 9 (sel-9) of Caenorhabditis elegans.